Reading from the N-terminus, the 129-residue chain is NADPH-dependent 7-cyano-7-deazaguanine reductase (129 aa).

Cys42 (thioimide intermediate) is an active-site residue. Catalysis depends on Asp49, which acts as the Proton donor. Substrate is bound by residues 64–66 (VEL) and 83–84 (HE).

It belongs to the GTP cyclohydrolase I family. QueF type 1 subfamily.

It is found in the cytoplasm. It catalyses the reaction 7-aminomethyl-7-carbaguanine + 2 NADP(+) = 7-cyano-7-deazaguanine + 2 NADPH + 3 H(+). It participates in tRNA modification; tRNA-queuosine biosynthesis. Its function is as follows. Catalyzes the NADPH-dependent reduction of 7-cyano-7-deazaguanine (preQ0) to 7-aminomethyl-7-deazaguanine (preQ1). The chain is NADPH-dependent 7-cyano-7-deazaguanine reductase from Synechococcus sp. (strain CC9605).